A 132-amino-acid chain; its full sequence is Small ribosomal subunit protein uS8 (132 aa).

It belongs to the universal ribosomal protein uS8 family. As to quaternary structure, part of the 30S ribosomal subunit. Contacts proteins S5 and S12.

One of the primary rRNA binding proteins, it binds directly to 16S rRNA central domain where it helps coordinate assembly of the platform of the 30S subunit. This is Small ribosomal subunit protein uS8 from Xanthomonas oryzae pv. oryzae (strain MAFF 311018).